A 341-amino-acid polypeptide reads, in one-letter code: MSQKFANTGSFIEREDLGKPNKGVDRVQKGFTAAYPTQSSIPYRHRRSVIPESEKRGFNSQARRFYSKKDDIPGPGFYNVIHQSLVFNSVSLSKRGTCTFPSTCARLGPIISKYPAANAYTIRSELASKKDFSNSCSSMFQLPTFIKVVKSETPAPNHYNASISICKQRNNVCARAGFLSKTPRGFVPSSEPGGPAPGHYDVNESLVRESPKVLVSCFKSKTGRGLKPTSTGPGPGYYNPNDQTKILRKSHLPKTTLLNFSAQPLPLPEKPPLPGPGQYEIVNYQGPPKHFISTASFVSNTSRWPVKSSKPTLPGPASYKPEIPGKQSFLYNEDNKWIPAV.

Positions 1-10 (MSQKFANTGS) are enriched in polar residues. The interval 1 to 23 (MSQKFANTGSFIEREDLGKPNKG) is disordered. The span at 12-23 (IEREDLGKPNKG) shows a compositional bias: basic and acidic residues. STPGR repeat units lie at residues 73–80 (PGPGFYNV), 115–123 (PAANAYTIR), 154–160 (PAPNHYN), 194–213 (GPAP…SPKV), 232–254 (GPGP…HLPK), 273–284 (LPGPGQYEIVNY), and 313–323 (LPGPASYKPEI). Tyr-78 carries the phosphotyrosine modification.

Belongs to the STPG1 family.

The protein resides in the cytoplasm. It localises to the nucleus. Functionally, may positively contribute to the induction of apoptosis triggered by O(6)-methylguanine. This Rattus norvegicus (Rat) protein is O(6)-methylguanine-induced apoptosis 2 (Stpg1).